Consider the following 63-residue polypeptide: Frenatin 1.1 (63 aa).

The signal sequence occupies residues 1 to 22 (MAFLKKSLFLVLFLGLVSLSIC). Positions 23–49 (EKEKKEQEDEDENEEEKESEEGSEEKR) are excised as a propeptide. The disordered stretch occupies residues 25 to 63 (EKKEQEDEDENEEEKESEEGSEEKRGLLDTLGGILGLGR). Over residues 30 to 45 (EDEDENEEEKESEEGS) the composition is skewed to acidic residues. At L61 the chain carries Leucine amide.

As to expression, expressed by the skin glands.

Its subcellular location is the secreted. Antimicrobial peptide with selective activity. Is only active against Micrococcus luteus (MIC=25 ug/ml) and not against Bacillus cereus, Escherichia coli, Leuconostoc mesenteroides, Micrococcus luteus, Pastewella haemolytica, Staphylococcus aureus, Streptococcus faecalis and Streptococcus uberis. The protein is Frenatin 1.1 of Nyctimystes infrafrenatus (White-lipped tree frog).